The sequence spans 441 residues: Trigger factor (441 aa).

In terms of domain architecture, PPIase FKBP-type spans 163-248 (GDQVVFDFVG…IKEVKKPVPA (86 aa)).

Belongs to the FKBP-type PPIase family. Tig subfamily.

The protein resides in the cytoplasm. The catalysed reaction is [protein]-peptidylproline (omega=180) = [protein]-peptidylproline (omega=0). Involved in protein export. Acts as a chaperone by maintaining the newly synthesized protein in an open conformation. Functions as a peptidyl-prolyl cis-trans isomerase. The protein is Trigger factor of Jannaschia sp. (strain CCS1).